The following is a 107-amino-acid chain: Death-associated protein-like 1 (107 aa).

The tract at residues 1-26 (MANEVQVQLSPLKGGHPPAVKAGGKR) is disordered.

In terms of tissue distribution, detected in the corneal epithelium, and only in trace amounts in the liver, bladder, brain, heart, and stomach.

In terms of biological role, may play a role in the early stages of epithelial differentiation or in apoptosis. The polypeptide is Death-associated protein-like 1 (DAPL1) (Bos taurus (Bovine)).